Reading from the N-terminus, the 100-residue chain is Urease subunit gamma (100 aa).

This sequence belongs to the urease gamma subunit family. As to quaternary structure, heterotrimer of UreA (gamma), UreB (beta) and UreC (alpha) subunits. Three heterotrimers associate to form the active enzyme.

The protein localises to the cytoplasm. The enzyme catalyses urea + 2 H2O + H(+) = hydrogencarbonate + 2 NH4(+). It functions in the pathway nitrogen metabolism; urea degradation; CO(2) and NH(3) from urea (urease route): step 1/1. The polypeptide is Urease subunit gamma (Acinetobacter baumannii (strain SDF)).